The primary structure comprises 754 residues: Lysyl oxidase homolog 3 (754 aa).

Positions 1-26 (MRAVSVWYCCPWGLLLLHCLCSFSVG) are cleaved as a signal peptide. 4 SRCR domains span residues 45-146 (FRLA…VICK), 170-283 (VRLR…VSCV), 308-408 (VRLK…VRCN), and 418-526 (IRLS…VICS). Intrachain disulfides connect Cys-71–Cys-135, Cys-84–Cys-145, Cys-115–Cys-125, Cys-202–Cys-272, Cys-215–Cys-282, Cys-249–Cys-259, Cys-333–Cys-397, Cys-346–Cys-407, Cys-377–Cys-387, Cys-447–Cys-512, Cys-460–Cys-525, Cys-493–Cys-503, Cys-555–Cys-561, Cys-607–Cys-655, Cys-639–Cys-645, Cys-667–Cys-677, and Cys-714–Cys-728. N-linked (GlcNAc...) asparagine glycosylation occurs at Asn-112. The N-linked (GlcNAc...) asparagine glycan is linked to Asn-267. Asn-391 and Asn-482 each carry an N-linked (GlcNAc...) asparagine glycan. The tract at residues 530–733 (SDLLLHSALV…WVHNCHIGDA (204 aa)) is lysyl-oxidase like. Residues His-608, His-610, and His-612 each coordinate Cu cation. An N-linked (GlcNAc...) asparagine glycan is attached at Asn-626. The lysine tyrosylquinone (Lys-Tyr) cross-link spans 635–671 (KASFCLEDTECQEDVSKRYECANFGEQGITVGCWDLY). Residue Tyr-671 is modified to 2',4',5'-topaquinone.

Belongs to the lysyl oxidase family. Requires Cu cation as cofactor. Lysine tyrosylquinone residue serves as cofactor. The lysine tyrosylquinone cross-link (LTQ) is generated by condensation of the epsilon-amino group of a lysine with a topaquinone produced by oxidation of tyrosine. As to expression, expressed in palate: predominantly present in the palate mesenchyme and tongue (at protein level). In spine, expressed in the original intervertebral disk, cartilage primordia, anterior and posterior longitudinal ligaments, meninges of spinal cord, lung and heart. In eyes, strongly expressed in the skin of the eyelid and weakly expressed in the cornea and sclera. In lung, predominantly expressed in the pulmonary mesenchyme. In developing muscle, expressed at myofiber ends (at protein level).

The protein localises to the secreted. It is found in the extracellular space. The protein resides in the cytoplasm. It localises to the nucleus. The catalysed reaction is L-lysyl-[protein] + O2 + H2O = (S)-2-amino-6-oxohexanoyl-[protein] + H2O2 + NH4(+). It carries out the reaction N(6)-acetyl-L-lysyl-[protein] + O2 + H2O = acetamide + (S)-2-amino-6-oxohexanoyl-[protein] + H2O2. Functionally, protein-lysine 6-oxidase that mediates the oxidation of peptidyl lysine residues to allysine in target proteins. Catalyzes the post-translational oxidative deamination of peptidyl lysine residues in precursors of elastin and different types of collagens, a prerequisite in the formation of cross-links between collagens and elastin. Required for somite boundary formation by catalyzing oxidation of fibronectin (FN1), enhancing integrin signaling in myofibers and their adhesion to the myotendinous junction (MTJ). Acts as a regulator of inflammatory response by inhibiting differentiation of naive CD4(+) T-cells into T-helper Th17 or regulatory T-cells (Treg): acts by interacting with STAT3 in the nucleus and catalyzing both deacetylation and oxidation of lysine residues on STAT3, leading to disrupt STAT3 dimerization and inhibit STAT3 transcription activity. Oxidation of lysine residues to allysine on STAT3 preferentially takes place on lysine residues that are acetylated. Also able to catalyze deacetylation of lysine residues on STAT3. This is Lysyl oxidase homolog 3 from Mus musculus (Mouse).